Reading from the N-terminus, the 185-residue chain is Ribosome-recycling factor (185 aa).

Belongs to the RRF family.

The protein resides in the cytoplasm. In terms of biological role, responsible for the release of ribosomes from messenger RNA at the termination of protein biosynthesis. May increase the efficiency of translation by recycling ribosomes from one round of translation to another. This chain is Ribosome-recycling factor, found in Salinispora tropica (strain ATCC BAA-916 / DSM 44818 / JCM 13857 / NBRC 105044 / CNB-440).